The following is a 506-amino-acid chain: UBX domain-containing protein 4 (506 aa).

The interval 1-199 (MLWFQGAIPA…PAEDLTVRVE (199 aa)) is interaction with UBQLN1. The Cytoplasmic segment spans residues 1–411 (MLWFQGAIPA…VHSSSGDIWT (411 aa)). The disordered stretch occupies residues 110–194 (QQMHSSKGEA…CSNQRPAEDL (85 aa)). Composition is skewed to polar residues over residues 120 to 136 (SVTN…TPSA) and 153 to 167 (LCET…SDTA). The UBX domain maps to 313 to 391 (DRSTIARIQF…ELAPSASVVL (79 aa)). The stretch at 412–432 (LLGTVLYPFLAIWRLISNFLF) is an intramembrane region. The Cytoplasmic portion of the chain corresponds to 433-506 (SNPPPAQTSA…TWNGNSTQQM (74 aa)). The disordered stretch occupies residues 437 to 506 (PAQTSARATS…TWNGNSTQQM (70 aa)). Positions 444–456 (ATSTEPSNSASSS) are enriched in low complexity. Basic and acidic residues predominate over residues 457–489 (KSEKREPVRKRMLEKRGEDFKKEGKIYRLRTQD). At Thr-487 the chain carries Phosphothreonine. Residues 496-506 (NTWNGNSTQQM) show a composition bias toward polar residues.

In terms of assembly, directly interacts with VCP. Interacts with UBQLN1. Forms a complex with VCP and UBQLN1. In terms of tissue distribution, expressed in many tissues, including brain, heart, kidney, liver, muscle and spleen (at protein level).

It localises to the endoplasmic reticulum membrane. It is found in the nucleus envelope. Functionally, involved in endoplasmic reticulum-associated protein degradation (ERAD). Acts as a platform to recruit both UBQLN1 and VCP to the ER during ERAD. This chain is UBX domain-containing protein 4 (Ubxn4), found in Mus musculus (Mouse).